A 169-amino-acid polypeptide reads, in one-letter code: TPD1 protein homolog 1B (169 aa).

The first 25 residues, 1 to 25 (MADCTTMRLASSVTIILLLLVASQA), serve as a signal peptide directing secretion.

As to expression, expressed in roots, and at low levels in anthers during meiosis.

May play a role during anther development. The protein is TPD1 protein homolog 1B of Oryza sativa subsp. japonica (Rice).